Here is a 294-residue protein sequence, read N- to C-terminus: Ribosomal protein L11 methyltransferase (294 aa).

The S-adenosyl-L-methionine site is built by T144, G165, D187, and N229.

It belongs to the methyltransferase superfamily. PrmA family.

The protein resides in the cytoplasm. It carries out the reaction L-lysyl-[protein] + 3 S-adenosyl-L-methionine = N(6),N(6),N(6)-trimethyl-L-lysyl-[protein] + 3 S-adenosyl-L-homocysteine + 3 H(+). Its function is as follows. Methylates ribosomal protein L11. This Cellvibrio japonicus (strain Ueda107) (Pseudomonas fluorescens subsp. cellulosa) protein is Ribosomal protein L11 methyltransferase.